The chain runs to 251 residues: Probable transcriptional regulatory protein NFA_37020 (251 aa).

Belongs to the TACO1 family.

Its subcellular location is the cytoplasm. The polypeptide is Probable transcriptional regulatory protein NFA_37020 (Nocardia farcinica (strain IFM 10152)).